Here is a 525-residue protein sequence, read N- to C-terminus: 2-isopropylmalate synthase (525 aa).

Positions 5–267 (VIIFDTTLRD…HTGIHHQEIY (263 aa)) constitute a Pyruvate carboxyltransferase domain. The Mn(2+) site is built by Asp-14, His-202, His-204, and Asn-238. The segment at 392–525 (RLEYFSVQSS…NNSQDMQETV (134 aa)) is regulatory domain.

This sequence belongs to the alpha-IPM synthase/homocitrate synthase family. LeuA type 1 subfamily. Homodimer. The cofactor is Mn(2+).

Its subcellular location is the cytoplasm. It catalyses the reaction 3-methyl-2-oxobutanoate + acetyl-CoA + H2O = (2S)-2-isopropylmalate + CoA + H(+). Its pathway is amino-acid biosynthesis; L-leucine biosynthesis; L-leucine from 3-methyl-2-oxobutanoate: step 1/4. In terms of biological role, catalyzes the condensation of the acetyl group of acetyl-CoA with 3-methyl-2-oxobutanoate (2-ketoisovalerate) to form 3-carboxy-3-hydroxy-4-methylpentanoate (2-isopropylmalate). This chain is 2-isopropylmalate synthase, found in Sodalis glossinidius (strain morsitans).